A 427-amino-acid polypeptide reads, in one-letter code: UDP-N-acetylglucosamine 1-carboxyvinyltransferase (427 aa).

Residue 22–23 (KN) coordinates phosphoenolpyruvate. Residue Arg-99 participates in UDP-N-acetyl-alpha-D-glucosamine binding. The Proton donor role is filled by Cys-123. Position 123 is a 2-(S-cysteinyl)pyruvic acid O-phosphothioketal (Cys-123). UDP-N-acetyl-alpha-D-glucosamine is bound by residues 128–132 (RPIDL), Asp-313, and Ile-335.

This sequence belongs to the EPSP synthase family. MurA subfamily.

The protein resides in the cytoplasm. It catalyses the reaction phosphoenolpyruvate + UDP-N-acetyl-alpha-D-glucosamine = UDP-N-acetyl-3-O-(1-carboxyvinyl)-alpha-D-glucosamine + phosphate. The protein operates within cell wall biogenesis; peptidoglycan biosynthesis. Cell wall formation. Adds enolpyruvyl to UDP-N-acetylglucosamine. This Novosphingobium aromaticivorans (strain ATCC 700278 / DSM 12444 / CCUG 56034 / CIP 105152 / NBRC 16084 / F199) protein is UDP-N-acetylglucosamine 1-carboxyvinyltransferase.